We begin with the raw amino-acid sequence, 497 residues long: Aluminum-activated malate transporter 10 (497 aa).

Transmembrane regions (helical) follow at residues 66–86 (KVVH…FYYM), 88–108 (PLYD…VVVF), 123–143 (VVAT…ATQS), 148–168 (VFVI…SRFV), 173–193 (ARFD…SVGG), and 210–230 (IAIG…IWAG). 2 disordered regions span residues 413–437 (PIET…ERTT) and 476–497 (DFEQ…PLSS). Residues 417 to 436 (NKPEEVPSEEENKVDSEERT) are compositionally biased toward basic and acidic residues. Residues 487-497 (DNNTKQPPLSS) show a composition bias toward polar residues.

The protein belongs to the aromatic acid exporter (TC 2.A.85) family.

The protein resides in the membrane. Malate transporter. The polypeptide is Aluminum-activated malate transporter 10 (ALMT10) (Arabidopsis thaliana (Mouse-ear cress)).